The primary structure comprises 529 residues: Probable alpha-galactosidase A (529 aa).

A signal peptide spans 1–19 (MKALFAAITMAHALLQTQA). Residues Cys-42 and Cys-74 are joined by a disulfide bond. 4 N-linked (GlcNAc...) asparagine glycosylation sites follow: Asn-45, Asn-83, Asn-89, and Asn-119. Cys-122 and Cys-152 are disulfide-bonded. Asp-150 (nucleophile) is an active-site residue. Residue Asn-199 is glycosylated (N-linked (GlcNAc...) asparagine). The active-site Proton donor is the Asp-208. An N-linked (GlcNAc...) asparagine glycan is attached at Asn-351. The Ricin B-type lectin domain maps to 408–528 (RVDAVSTGIV…GLPSGVRVSG (121 aa)). Disulfide bonds link Cys-425/Cys-438 and Cys-462/Cys-475.

This sequence belongs to the glycosyl hydrolase 27 family.

Its subcellular location is the secreted. It carries out the reaction Hydrolysis of terminal, non-reducing alpha-D-galactose residues in alpha-D-galactosides, including galactose oligosaccharides, galactomannans and galactolipids.. Its function is as follows. Hydrolyzes a variety of simple alpha-D-galactoside as well as more complex molecules such as oligosaccharides and polysaccharides. The polypeptide is Probable alpha-galactosidase A (aglA) (Aspergillus terreus (strain NIH 2624 / FGSC A1156)).